A 414-amino-acid chain; its full sequence is Glucose-1-phosphate adenylyltransferase (414 aa).

Residues Tyr-103, Gly-168, 183–184, and Ser-201 each bind alpha-D-glucose 1-phosphate; that span reads EK.

The protein belongs to the bacterial/plant glucose-1-phosphate adenylyltransferase family. As to quaternary structure, homotetramer.

It carries out the reaction alpha-D-glucose 1-phosphate + ATP + H(+) = ADP-alpha-D-glucose + diphosphate. It functions in the pathway glycan biosynthesis; glycogen biosynthesis. Involved in the biosynthesis of ADP-glucose, a building block required for the elongation reactions to produce glycogen. Catalyzes the reaction between ATP and alpha-D-glucose 1-phosphate (G1P) to produce pyrophosphate and ADP-Glc. This Thermus thermophilus (strain ATCC 27634 / DSM 579 / HB8) protein is Glucose-1-phosphate adenylyltransferase.